Here is an 83-residue protein sequence, read N- to C-terminus: Large ribosomal subunit protein uL23 (83 aa).

It belongs to the universal ribosomal protein uL23 family. As to quaternary structure, part of the 50S ribosomal subunit. Contacts protein L29.

Binds to 23S rRNA. One of the proteins that surrounds the polypeptide exit tunnel on the outside of the ribosome. This is Large ribosomal subunit protein uL23 from Thermoplasma volcanium (strain ATCC 51530 / DSM 4299 / JCM 9571 / NBRC 15438 / GSS1).